The sequence spans 511 residues: Membrane-bound lytic murein transglycosylase F (511 aa).

The N-terminal stretch at 1-19 (MKKLKINYLLIGIVTLLLA) is a signal peptide. The segment at 20–269 (AALWPSIPWS…RLEEKYLGHG (250 aa)) is non-LT domain. Positions 270–511 (NDFDYVDTRT…ARMKLPGHLY (242 aa)) are LT domain. Residue Glu314 is part of the active site.

The protein in the N-terminal section; belongs to the bacterial solute-binding protein 3 family. In the C-terminal section; belongs to the transglycosylase Slt family.

Its subcellular location is the cell outer membrane. The enzyme catalyses Exolytic cleavage of the (1-&gt;4)-beta-glycosidic linkage between N-acetylmuramic acid (MurNAc) and N-acetylglucosamine (GlcNAc) residues in peptidoglycan, from either the reducing or the non-reducing ends of the peptidoglycan chains, with concomitant formation of a 1,6-anhydrobond in the MurNAc residue.. Murein-degrading enzyme that degrades murein glycan strands and insoluble, high-molecular weight murein sacculi, with the concomitant formation of a 1,6-anhydromuramoyl product. Lytic transglycosylases (LTs) play an integral role in the metabolism of the peptidoglycan (PG) sacculus. Their lytic action creates space within the PG sacculus to allow for its expansion as well as for the insertion of various structures such as secretion systems and flagella. In Klebsiella pneumoniae subsp. pneumoniae (strain ATCC 700721 / MGH 78578), this protein is Membrane-bound lytic murein transglycosylase F.